The chain runs to 859 residues: Linoleate 9S-lipoxygenase 1 (859 aa).

In terms of domain architecture, PLAT spans 21-161 (VKGTVVLMKK…HYTTDRVFFS (141 aa)). In terms of domain architecture, Lipoxygenase spans 164 to 859 (TYLPHETPAT…GRGIPNSVSI (696 aa)). A disordered region spans residues 213 to 246 (KNPRPVLGGTQEYPYPRRGRTGRKPTKEDPQTES). His-519, His-524, His-711, Asn-715, and Ile-859 together coordinate Fe cation.

The protein belongs to the lipoxygenase family. In terms of assembly, monomer. It depends on Fe cation as a cofactor. Seedlings, roots, leaves, and flowers (at protein level). Expressed in guard cells.

The protein resides in the cytoplasm. It carries out the reaction (9Z,12Z)-octadecadienoate + O2 = (9S)-hydroperoxy-(10E,12Z)-octadecadienoate. It catalyses the reaction (9Z,12Z,15Z)-octadecatrienoate + O2 = (9S)-hydroperoxy-(10E,12Z,15Z)-octadecatrienoate. The protein operates within lipid metabolism; oxylipin biosynthesis. Functionally, 9S-lipoxygenase that can use linoleic acid or linolenic acid as substrates. Plant lipoxygenases may be involved in a number of diverse aspects of plant physiology including growth and development, pest resistance, and senescence or responses to wounding. Catalyzes the hydroperoxidation of lipids containing a cis,cis-1,4-pentadiene structure. Function as regulators of root development by controlling the emergence of lateral roots. 9S-lypoxygenase-derived oxylipins may play an antagonistic role to ethylene signaling in the control of responses involving oxidative stress, lipid peroxidation and plant defense. LOX1-derived oxylipins may be involved in stress signaling from roots to shoots in response to cadmium exposure. 9S-lypoxygenase-derived oxylipins are engaged during infection to control the balance between salicylic acid (SA) and jasmonate (JA) signaling to facilitate infection by the fungal pathogen Fusarium graminearum. 9S-lypoxygenase-derived oxylipins activate brassinosteroid signaling to promote cell wall-based defense and limit pathogen infection. The LOX1-derived compound (9S)-hydroperoxy-(10E,12Z,15Z)-octadecatrienoate protects plant tissues against infection by the bacterial pathogen Pseudomonas syringae pv tomato DC3000. The LOX1-derived oxylipins are required to trigger stomatal closure in response to both infection by the bacterial pathogen Pseudomonas syringae pv tomato DC3000, and the pathogen-associated molecular pattern (PAMP) flagellin peptide flg22. Contributes to the oxidation of free fatty acids during seed aging. This Arabidopsis thaliana (Mouse-ear cress) protein is Linoleate 9S-lipoxygenase 1.